We begin with the raw amino-acid sequence, 460 residues long: MLKEYRTVTEVVGPLMAVEGVEGVKYDELVEIEMQTGELRRGKVLEVNGDKAMVQLFEGSAGINLKNTKVRFLGRPLEIGVSEDMLGRVFDGMGRPKDNGPNIIPEKRLDINGEAINPVARNYPSEFIQTGISAIDGLNTLVRGQKLPVFSGSGLPHKELAAQIARQAKVLNSDSKFAVVFAAIGITFEEAEFFVDEFTKTGAIDRSVLFMNLASDPAIERIATPRMALTTAEYLAYEKGMHVLVIMTDITNYCEALREVSAARKEVPGRRGYPGYLYTDLSTLYERAGRLVGKEGSITQIPILTMPEDDKTHPIPDLTGYITEGQIILSRELYKKGIMPPIDVLPSLSRLKDKGIGKGKTREDHADTMNQLFSAYAQGKQAKELAAILGESALSDVDKAYAKFAEAFENEYVSQGFTTNRTIEETLNLGWKLLKILPRTELKRIRDEYLEKYMPVGEDE.

It belongs to the ATPase alpha/beta chains family.

Produces ATP from ADP in the presence of a proton gradient across the membrane. The V-type beta chain is a regulatory subunit. In Clostridium perfringens (strain ATCC 13124 / DSM 756 / JCM 1290 / NCIMB 6125 / NCTC 8237 / Type A), this protein is V-type ATP synthase beta chain.